Here is a 311-residue protein sequence, read N- to C-terminus: Ornithine carbamoyltransferase (311 aa).

Carbamoyl phosphate-binding positions include 54–57 (STRT), Gln-81, Arg-105, and 132–135 (HPCQ). L-ornithine is bound by residues Asn-163, Asp-221, and 225 to 226 (SM). Carbamoyl phosphate-binding positions include 261 to 262 (CL) and Arg-289.

Belongs to the aspartate/ornithine carbamoyltransferase superfamily. OTCase family.

The protein localises to the cytoplasm. The catalysed reaction is carbamoyl phosphate + L-ornithine = L-citrulline + phosphate + H(+). Its pathway is amino-acid degradation; L-arginine degradation via ADI pathway; carbamoyl phosphate from L-arginine: step 2/2. Functionally, reversibly catalyzes the transfer of the carbamoyl group from carbamoyl phosphate (CP) to the N(epsilon) atom of ornithine (ORN) to produce L-citrulline. The polypeptide is Ornithine carbamoyltransferase (Azoarcus sp. (strain BH72)).